The chain runs to 433 residues: MANIVAIVGRPNVGKSTLFNRLVEERKAIMASESGTTRDRHYGYATWNGKNFTVVDTGGYVQGSSDIFEKSICEQAKIAIEEASVVLFMVDCQVGITAMDKEVAHILRAADKPVLLVANKADNVDTALMAHEFHALGLGNPYPISAASGTGTGDLLDQVTVYCQDTIEQETDIPKIAILGRPNVGKSSLLNALLGEERSIVTPIAGTTRDAIDTTYNLYGKNFILTDTAGIRKKSKVKEDIEFYSTLRALKALQDADVCIIMIDATLGLEGQDVNLISLAYKYKKGILLLVNKWDLIKKDNHTNAQFKKNIEQELGAHSHIPILFISALHKQRIFQAIEKALEVYTNKTQKISTAALNQTMLPVIERYPPPAVKGKYIKIKYVARLPTHTPVIAFFCNLPQYVQPPYKRYLENQLRKNFNLAGVPVQLVFRKK.

2 consecutive EngA-type G domains span residues 3–167 and 174–349; these read NIVA…QDTI and PKIA…TNKT. GTP contacts are provided by residues 9–16, 56–60, 119–122, 180–187, 227–231, and 292–295; these read GRPNVGKS, DTGGY, NKAD, DTAGI, and NKWD. The KH-like domain occupies 350–433; the sequence is QKISTAALNQ…VPVQLVFRKK (84 aa).

It belongs to the TRAFAC class TrmE-Era-EngA-EngB-Septin-like GTPase superfamily. EngA (Der) GTPase family. Associates with the 50S ribosomal subunit.

Functionally, GTPase that plays an essential role in the late steps of ribosome biogenesis. The chain is GTPase Der from Amoebophilus asiaticus (strain 5a2).